The following is a 414-amino-acid chain: Thyroid hormone receptor beta-B (414 aa).

A modulating region spans residues 1–59; that stretch reads MPSSMSVRLFTASAAQRKKIQEGDCCVVLAGKTQGRFILIGAVARVSGYIPSYLDKDEL. 2 NR C4-type zinc fingers span residues 60–80 and 98–122; these read CVVC…CEGC and CKYE…FKKC. Positions 60 to 134 form a DNA-binding region, nuclear receptor; that stretch reads CVVCGDKATG…VGMATDLVLD (75 aa). One can recognise an NR LBD domain in the interval 170–414; that stretch reads EEWELIQVVT…PPLFLEVFED (245 aa).

Belongs to the nuclear hormone receptor family. NR1 subfamily.

The protein resides in the nucleus. High affinity receptor for triiodothyronine (T3). The chain is Thyroid hormone receptor beta-B (thrb-b) from Xenopus laevis (African clawed frog).